The primary structure comprises 88 residues: Putative sulfur carrier protein AF_0554 (88 aa).

C26 acts as the Cysteine persulfide intermediate in catalysis.

It belongs to the sulfur carrier protein TusA family.

This is Putative sulfur carrier protein AF_0554 from Archaeoglobus fulgidus (strain ATCC 49558 / DSM 4304 / JCM 9628 / NBRC 100126 / VC-16).